The sequence spans 148 residues: MMIFRALIAAATLAIAIATTLPAAADEVAVKMLNSGPGGMMVFDPALVRLKPGDSIKFLPTDKGHNVETIKGMAPDGADYVKTTVGQEAVVKFDKEGVYGFKCAPHYMMGMVALVVVGDKRDNLEAAKSVQHNKLTQKRLDPLFAQIQ.

The N-terminal stretch at 1-25 (MMIFRALIAAATLAIAIATTLPAAA) is a signal peptide. In terms of domain architecture, Plastocyanin-like spans 30-118 (VKMLNSGPGG…MGMVALVVVG (89 aa)). 4 residues coordinate Cu cation: H65, C103, H106, and M111.

It depends on Cu cation as a cofactor.

The protein resides in the periplasm. The polypeptide is Pseudoazurin (Methylorubrum extorquens (strain ATCC 14718 / DSM 1338 / JCM 2805 / NCIMB 9133 / AM1) (Methylobacterium extorquens)).